The chain runs to 278 residues: Secoisolariciresinol dehydrogenase (278 aa).

Residues 23-28, D47, V73, and N99 contribute to the NAD(+) site; that span reads GGAGGI. Positions 104 and 164 each coordinate substrate. Catalysis depends on Y167, which acts as the Proton donor/acceptor. NAD(+)-binding residues include K171 and V200.

It belongs to the short-chain dehydrogenases/reductases (SDR) family. Homotetramer.

It carries out the reaction (-)-secoisolariciresinol + 2 NAD(+) = (-)-matairesinol + 2 NADH + 2 H(+). Its function is as follows. Oxidoreductase involved in lignan biosynthesis. Catalyzes the stereospecific conversion of (-)-secoisolariciresinol to (-)-matairesinol via a lactol intermediate. In Podophyllum peltatum (American mandrake), this protein is Secoisolariciresinol dehydrogenase.